We begin with the raw amino-acid sequence, 161 residues long: Nucleotide-binding protein PSEEN4469 (161 aa).

It belongs to the YajQ family.

In terms of biological role, nucleotide-binding protein. The protein is Nucleotide-binding protein PSEEN4469 of Pseudomonas entomophila (strain L48).